The sequence spans 87 residues: Neurotoxin Cex4 (87 aa).

Residues 1–19 form the signal peptide; sequence MNSLLMITACLFLIGTVWA. An LCN-type CS-alpha/beta domain is found at 20–85; it reads KEGYLVNKST…TYPLPNKSCG (66 aa). Cystine bridges form between Cys-31–Cys-84, Cys-35–Cys-60, Cys-44–Cys-65, and Cys-48–Cys-67. Position 84 is a cysteine amide (Cys-84). The propeptide occupies 85 to 87; the sequence is GRK.

Belongs to the long (4 C-C) scorpion toxin superfamily. Sodium channel inhibitor family. Beta subfamily. Expressed by the venom gland.

It localises to the secreted. Beta toxins bind voltage-independently at site-4 of sodium channels (Nav) and shift the voltage of activation toward more negative potentials thereby affecting sodium channel activation and promoting spontaneous and repetitive firing. In Centruroides exilicauda (Bark scorpion), this protein is Neurotoxin Cex4.